We begin with the raw amino-acid sequence, 153 residues long: Glucose-6-phosphate 1-dehydrogenase (153 aa).

Residues Arg-21 and Lys-120 each coordinate NADP(+). Lys-120 contributes to the D-glucose 6-phosphate binding site.

This sequence belongs to the glucose-6-phosphate dehydrogenase family.

It localises to the cytoplasm. Its subcellular location is the cytosol. The catalysed reaction is D-glucose 6-phosphate + NADP(+) = 6-phospho-D-glucono-1,5-lactone + NADPH + H(+). It participates in carbohydrate degradation; pentose phosphate pathway; D-ribulose 5-phosphate from D-glucose 6-phosphate (oxidative stage): step 1/3. Its function is as follows. Cytosolic glucose-6-phosphate dehydrogenase that catalyzes the first and rate-limiting step of the oxidative branch within the pentose phosphate pathway/shunt, an alternative route to glycolysis for the dissimilation of carbohydrates and a major source of reducing power and metabolic intermediates for fatty acid and nucleic acid biosynthetic processes. This chain is Glucose-6-phosphate 1-dehydrogenase (ZW), found in Culex pipiens (House mosquito).